Here is a 360-residue protein sequence, read N- to C-terminus: Probable CCR4-associated factor 1 homolog 1 (360 aa).

Residues Asp-37, Glu-39, Asp-155, and Asp-226 each contribute to the a divalent metal cation site.

The protein belongs to the CAF1 family. In terms of assembly, component of the CCR4-NOT complex, at least composed of CRR4 and CAF1 proteins. A divalent metal cation serves as cofactor.

It localises to the nucleus. It is found in the cytoplasm. It carries out the reaction Exonucleolytic cleavage of poly(A) to 5'-AMP.. Ubiquitous transcription factor required for a diverse set of processes. It is a component of the CCR4 complex involved in the control of gene expression. This chain is Probable CCR4-associated factor 1 homolog 1 (CAF1-1), found in Arabidopsis thaliana (Mouse-ear cress).